The chain runs to 532 residues: Drimenyl diphosphate synthase (532 aa).

(2E,6E)-farnesyl diphosphate contacts are provided by Arg-121, Lys-122, Gln-152, and Trp-154. Glu-158 serves as a coordination point for Mg(2+). 4 PFTB repeats span residues 275–317, 325–367, 428–469, and 475–518; these read PAAM…RVAG, IAAA…APNP, KRQA…SRDG, and LARA…CVLL. The active-site Proton donor is the Asp-304. Arg-502 is a (2E,6E)-farnesyl diphosphate binding site.

It belongs to the terpene cyclase/mutase family. The cofactor is Mg(2+). Ni(2+) is required as a cofactor. Requires Co(2+) as cofactor.

It catalyses the reaction (2E,6E)-farnesyl diphosphate = (5S,9S,10S)-drim-7-en-11-yl diphosphate. Its function is as follows. Catalyzes the cyclization of farnesyl diphosphate (FPP) to drimenyl diphosphate. The protein is Drimenyl diphosphate synthase of Streptantibioticus cattleyicolor (strain ATCC 35852 / DSM 46488 / JCM 4925 / NBRC 14057 / NRRL 8057) (Streptomyces cattleya).